Reading from the N-terminus, the 155-residue chain is Transcriptional repressor NrdR (155 aa).

The segment at 3 to 34 (CPYCGHLEDRVVDSRETQDGQATRRRRACLSC) is a zinc-finger region. Residues 49-139 (PQVVKKDGRR…VYRAFRDVGE (91 aa)) form the ATP-cone domain.

Belongs to the NrdR family. Requires Zn(2+) as cofactor.

Functionally, negatively regulates transcription of bacterial ribonucleotide reductase nrd genes and operons by binding to NrdR-boxes. The polypeptide is Transcriptional repressor NrdR (Anaeromyxobacter dehalogenans (strain 2CP-1 / ATCC BAA-258)).